The following is a 423-amino-acid chain: MERYTDLVISKIPELGFTNLLCHIYSLAGLCSNIDVSKFLTNCNGYVVEKYDKSTTAGKVSCIPIGMMLELVESGHLSRPNSSDELDQKKELTDELKTRYHSIYDVFELPTSIPLAYFFKPRLREKVSKAIDFSQMDLKIDDLSRKGIHTGENPKVVKMKIEPERGAWMSNRSIKNLVSQFAYGSEVDYIGQFDMRFLNSLAIHEKFDAFMNKHILSYILKDKIKSSTSRFVMFGFCYLSHWKCVIYDKKQCLVSFYDSGGNIPTEFHHYNNFYFYSFSDGFNTNHRHSVLDNTNCDIDVLFRFFECTFGAKIGCINVEVNQLLESECGMFISLFMILCTRTPPKSFKSLKKVYTFFKFLADKKMTLFKSILFNLHDLSLDITETDNAGLKEYKRMEKWTKKSINVICDKLTTKLNRIVDDDE.

Catalysis depends on residues His241, Asp248, and Cys328.

It belongs to the peptidase C57 family.

It localises to the virion. Its function is as follows. Late protein responsible for processing most or all of the viral core and membrane proteins known to undergo morphogenesis-associated proteolysis. These proteolytic events are involved in the transformation of immature virions (IV) into mature virions (MV). Probably cleaves at least the OPG129, OPG136, OPG098, and OPG144 precursors preferentially at Ala-Gly-|-Ala motifs. Also seems to process Ala-Gly-|-Ser and Ala-Gly-|-Thr motifs. The chain is Core protease OPG082 (OPG083) from Homo sapiens (Human).